The primary structure comprises 464 residues: Endo-1,4-beta-xylanase A (464 aa).

The first 33 residues, 1 to 33, serve as a signal peptide directing secretion; that stretch reads MFRHHPTRGRRTAGLLAAALATLSAGLTAVAPA. Residues 40–349 form the GH10 domain; it reads TATLGELAEA…KPAYHAIAAA (310 aa). Glu166 serves as the catalytic Proton donor. The Nucleophile role is filled by Glu271. The 104-residue stretch at 354–457 folds into the CBM2 domain; sequence SPAPGGNCTA…TPADVTCTPG (104 aa).

Belongs to the glycosyl hydrolase 10 (cellulase F) family. Requires Does not require any standard metal (Mg(2+), Mn2(+), Ca(2+)). as cofactor.

The catalysed reaction is Endohydrolysis of (1-&gt;4)-beta-D-xylosidic linkages in xylans.. It functions in the pathway glycan degradation; xylan degradation. Its activity is regulated as follows. Completely inhibited by Hg(2+), unaffected by EDTA. In terms of biological role, contributes to hydrolysis of hemicellulose, the major component of plant cell-walls. Hydrolyzes xylan to xylose and xylobiose. The chain is Endo-1,4-beta-xylanase A (xynAS9) from Streptomyces sp.